A 416-amino-acid chain; its full sequence is Glutamyl-tRNA reductase (416 aa).

Substrate-binding positions include 49-52 (TCNR), Ser105, 110-112 (EPQ), and Gln116. The active-site Nucleophile is Cys50. An NADP(+)-binding site is contributed by 185-190 (GAGETI).

This sequence belongs to the glutamyl-tRNA reductase family. Homodimer.

It carries out the reaction (S)-4-amino-5-oxopentanoate + tRNA(Glu) + NADP(+) = L-glutamyl-tRNA(Glu) + NADPH + H(+). The protein operates within porphyrin-containing compound metabolism; protoporphyrin-IX biosynthesis; 5-aminolevulinate from L-glutamyl-tRNA(Glu): step 1/2. Catalyzes the NADPH-dependent reduction of glutamyl-tRNA(Glu) to glutamate 1-semialdehyde (GSA). In Shewanella sediminis (strain HAW-EB3), this protein is Glutamyl-tRNA reductase.